A 166-amino-acid polypeptide reads, in one-letter code: Interferon gamma (166 aa).

The first 23 residues, M1 to C23, serve as a signal peptide directing secretion. A Pyrrolidone carboxylic acid modification is found at Q24. 2 N-linked (GlcNAc...) asparagine glycosylation sites follow: N39 and N106. Residues A147–Q166 are disordered. Positions N148–Q166 are enriched in basic residues.

This sequence belongs to the type II (or gamma) interferon family. In terms of assembly, homodimer. Interacts with IFNGR1 (via extracellular domain); this interaction promotes IFNGR1 dimerization. As to expression, released primarily from activated T lymphocytes.

It localises to the secreted. Its function is as follows. Type II interferon produced by immune cells such as T-cells and NK cells that plays crucial roles in antimicrobial, antiviral, and antitumor responses by activating effector immune cells and enhancing antigen presentation. Primarily signals through the JAK-STAT pathway after interaction with its receptor IFNGR1 to affect gene regulation. Upon IFNG binding, IFNGR1 intracellular domain opens out to allow association of downstream signaling components JAK2, JAK1 and STAT1, leading to STAT1 activation, nuclear translocation and transcription of IFNG-regulated genes. Many of the induced genes are transcription factors such as IRF1 that are able to further drive regulation of a next wave of transcription. Plays a role in class I antigen presentation pathway by inducing a replacement of catalytic proteasome subunits with immunoproteasome subunits. In turn, increases the quantity, quality, and repertoire of peptides for class I MHC loading. Increases the efficiency of peptide generation also by inducing the expression of activator PA28 that associates with the proteasome and alters its proteolytic cleavage preference. Up-regulates as well MHC II complexes on the cell surface by promoting expression of several key molecules such as cathepsins B/CTSB, H/CTSH, and L/CTSL. Participates in the regulation of hematopoietic stem cells during development and under homeostatic conditions by affecting their development, quiescence, and differentiation. The sequence is that of Interferon gamma (IFNG) from Equus caballus (Horse).